Reading from the N-terminus, the 407-residue chain is Venom metalloproteinase 3 (407 aa).

N-linked (GlcNAc...) asparagine glycans are attached at residues N42, N91, N126, and N166. Positions 191 to 405 (FYPKLLVLVD…TSAACLKDTY (215 aa)) constitute a Peptidase M12B domain. 2 disulfides stabilise this stretch: C317–C400 and C356–C384. H340 is a Zn(2+) binding site. E341 is a catalytic residue. Zn(2+) is bound by residues H344 and H350. The N-linked (GlcNAc...) asparagine glycan is linked to N391.

In the C-terminal section; belongs to the venom metalloproteinase (M12B) family. Monomer. Zn(2+) is required as a cofactor. As to expression, expressed by the venom gland.

The protein localises to the secreted. With respect to regulation, the gelatinase activity is inhibited by EDTA. The recombinant protein has gelatinase activity. In vivo, injection of this recombinant into fifth instar L.oleracea (host) larvae results in partial insect mortality associated with the molt to sixth instar, with surviving insects showing retarded development and growth. The sequence is that of Venom metalloproteinase 3 from Eulophus pennicornis (Parasitoid wasp).